An 889-amino-acid chain; its full sequence is Translation initiation factor IF-2 (889 aa).

Over residues 115 to 236 the composition is skewed to basic and acidic residues; it reads EAEAQAKAEA…EAERYSDHHI (122 aa). The disordered stretch occupies residues 115 to 293; it reads EAEAQAKAEA…RNRSTAPESM (179 aa). Residues 257–270 show a composition bias toward basic residues; it reads GRRARNKNTAKTKR. A compositionally biased stretch (basic and acidic residues) spans 271–280; that stretch reads GGKDARDGRE. In terms of domain architecture, tr-type G spans 389–558; it reads PRAPVVTIMG…LLQAEVLELK (170 aa). Positions 398-405 are G1; it reads GHVDHGKT. 398–405 is a binding site for GTP; sequence GHVDHGKT. The tract at residues 423-427 is G2; sequence GITQH. Residues 444-447 form a G3 region; sequence DTPG. GTP-binding positions include 444–448 and 498–501; these read DTPGH and NKMD. A G4 region spans residues 498–501; it reads NKMD. Positions 534–536 are G5; the sequence is SAK.

The protein belongs to the TRAFAC class translation factor GTPase superfamily. Classic translation factor GTPase family. IF-2 subfamily.

The protein localises to the cytoplasm. In terms of biological role, one of the essential components for the initiation of protein synthesis. Protects formylmethionyl-tRNA from spontaneous hydrolysis and promotes its binding to the 30S ribosomal subunits. Also involved in the hydrolysis of GTP during the formation of the 70S ribosomal complex. This Shewanella sp. (strain ANA-3) protein is Translation initiation factor IF-2.